A 454-amino-acid polypeptide reads, in one-letter code: Glutamyl-tRNA reductase (454 aa).

Substrate is bound by residues 49–52, Ser109, 114–116, and Gln120; these read TCNR and ETQ. The Nucleophile role is filled by Cys50. Residue 189–194 coordinates NADP(+); sequence GAGKMS. Positions 434–454 are disordered; sequence NDKNKQTSSSREQVLVSRFPD.

The protein belongs to the glutamyl-tRNA reductase family. In terms of assembly, homodimer.

The enzyme catalyses (S)-4-amino-5-oxopentanoate + tRNA(Glu) + NADP(+) = L-glutamyl-tRNA(Glu) + NADPH + H(+). It functions in the pathway porphyrin-containing compound metabolism; protoporphyrin-IX biosynthesis; 5-aminolevulinate from L-glutamyl-tRNA(Glu): step 1/2. In terms of biological role, catalyzes the NADPH-dependent reduction of glutamyl-tRNA(Glu) to glutamate 1-semialdehyde (GSA). This Brevibacillus brevis (strain 47 / JCM 6285 / NBRC 100599) protein is Glutamyl-tRNA reductase.